The following is a 101-amino-acid chain: Small ribosomal subunit protein uS14 (101 aa).

It belongs to the universal ribosomal protein uS14 family. As to quaternary structure, part of the 30S ribosomal subunit. Contacts proteins S3 and S10.

Functionally, binds 16S rRNA, required for the assembly of 30S particles and may also be responsible for determining the conformation of the 16S rRNA at the A site. This Stutzerimonas stutzeri (strain A1501) (Pseudomonas stutzeri) protein is Small ribosomal subunit protein uS14.